The chain runs to 191 residues: ADP-ribosylation factor (191 aa).

Residue Gly2 is the site of N-myristoyl glycine attachment. Residues 24–31 (GLDAAGKT), 67–71 (DVGGQ), and 128–131 (NKQD) each bind GTP.

The protein belongs to the small GTPase superfamily. Arf family.

It is found in the golgi apparatus. Functionally, GTP-binding protein involved in protein trafficking; may modulate vesicle budding and uncoating within the Golgi apparatus. The sequence is that of ADP-ribosylation factor from Giardia intestinalis (Giardia lamblia).